We begin with the raw amino-acid sequence, 249 residues long: Ribosomal RNA small subunit methyltransferase G (249 aa).

Positions 86, 91, and 178 each coordinate S-adenosyl-L-methionine.

The protein belongs to the methyltransferase superfamily. RNA methyltransferase RsmG family.

It localises to the cytoplasm. Specifically methylates the N7 position of a guanine in 16S rRNA. The sequence is that of Ribosomal RNA small subunit methyltransferase G from Bifidobacterium adolescentis (strain ATCC 15703 / DSM 20083 / NCTC 11814 / E194a).